Reading from the N-terminus, the 808-residue chain is Probable phosphoketolase 1 (808 aa).

Belongs to the XFP family. The cofactor is thiamine diphosphate.

This chain is Probable phosphoketolase 1, found in Nostoc sp. (strain PCC 7120 / SAG 25.82 / UTEX 2576).